Here is a 597-residue protein sequence, read N- to C-terminus: Arginine--tRNA ligase (597 aa).

A 'HIGH' region motif is present at residues 138–148; it reads ANPTGPMHVGH.

This sequence belongs to the class-I aminoacyl-tRNA synthetase family. In terms of assembly, monomer.

It localises to the cytoplasm. It carries out the reaction tRNA(Arg) + L-arginine + ATP = L-arginyl-tRNA(Arg) + AMP + diphosphate. The sequence is that of Arginine--tRNA ligase from Nitrobacter winogradskyi (strain ATCC 25391 / DSM 10237 / CIP 104748 / NCIMB 11846 / Nb-255).